Consider the following 321-residue polypeptide: Nucleus-vacuole junction protein 1 (321 aa).

The N-terminal stretch at 1 to 22 (MTRPPLVRGIFSLGLSVAVLKG) is a signal peptide. A TSC13-binding region spans residues 73-125 (ELSWRKVFNFISRQSSELDARIYVLILLLSFLLPIAWTVLDGDRETTLEDKDN). The chain crosses the membrane as a helical span at residues 94 to 114 (IYVLILLLSFLLPIAWTVLDG). An OSH1-binding region spans residues 139–195 (KHYNDGERAVLQFGKNRSEPIILSYKDMNVLEGEHEFTSKEEHSNSHLTSKSENALS). Serine 156 carries the phosphoserine modification. Basic and acidic residues predominate over residues 174–183 (EFTSKEEHSN). Residues 174-194 (EFTSKEEHSNSHLTSKSENAL) form a disordered region. Residues 184-194 (SHLTSKSENAL) show a composition bias toward polar residues. Serine 199 is modified (phosphoserine). The interval 210–275 (QLEEDKNEPN…SLKSSTSFPI (66 aa)) is disordered. Residues 233–321 (DCSSSSEVES…EQAYSQPFRY (89 aa)) form a VAC8-binding region. Residues 242–262 (SQSKCRKESTAEPDSLSRDTR) are compositionally biased toward basic and acidic residues. Low complexity predominate over residues 263–272 (TTSSLKSSTS). Residues serine 285 and serine 298 each carry the phosphoserine modification. The tract at residues 299–321 (PTKSSNLDAQVNTEQAYSQPFRY) is disordered.

In terms of assembly, interacts with OSH1, TSC13 and VAC8.

The protein resides in the nucleus outer membrane. Its function is as follows. Involved in the formation of nucleus-vacuole (NV) junctions during piecemeal microautophagy of the nucleus (PMN). NV junctions are interorganelle interfaces mediated by NVJ1 in the nuclear envelope and VAC8 on the vacuole membrane. Together, NVJ1 and VAC8 form Velcro-like patches through which teardrop-like portions of the nucleus are pinched off into the vacuolar lumen and degraded by the PMN process. Also acts as an outer-nuclear membrane receptor for OSH1 and TSC13. This is Nucleus-vacuole junction protein 1 (NVJ1) from Saccharomyces cerevisiae (strain YJM789) (Baker's yeast).